Here is a 256-residue protein sequence, read N- to C-terminus: Spheroidene monooxygenase (256 aa).

A compositionally biased stretch (low complexity) spans 1 to 23; it reads MTNELSNAAGASQQGPAASSFSA. The segment at 1–26 is disordered; it reads MTNELSNAAGASQQGPAASSFSADTP.

Belongs to the CrtA family. Heme is required as a cofactor.

It carries out the reaction spheroidene + 4 reduced [2Fe-2S]-[ferredoxin] + 2 O2 + 4 H(+) = spheroiden-2-one + 4 oxidized [2Fe-2S]-[ferredoxin] + 3 H2O. The catalysed reaction is spirilloxanthin + 4 reduced [2Fe-2S]-[ferredoxin] + 2 O2 + 4 H(+) = 2-oxospirilloxanthin + 4 oxidized [2Fe-2S]-[ferredoxin] + 3 H2O. It catalyses the reaction 2-oxospirilloxanthin + 4 reduced [2Fe-2S]-[ferredoxin] + 2 O2 + 4 H(+) = 2,2'-dioxospirilloxanthin + 4 oxidized [2Fe-2S]-[ferredoxin] + 3 H2O. The enzyme catalyses spheroidene + 2 reduced [2Fe-2S]-[ferredoxin] + O2 + 2 H(+) = 2-hydroxyspheroidene + 2 oxidized [2Fe-2S]-[ferredoxin] + H2O. It carries out the reaction 2-hydroxyspheroidene + 2 reduced [2Fe-2S]-[ferredoxin] + O2 + 2 H(+) = 2,2-dihydroxyspheroidene + 2 oxidized [2Fe-2S]-[ferredoxin] + H2O. The catalysed reaction is 2,2-dihydroxyspheroidene = spheroiden-2-one + H2O. It catalyses the reaction spirilloxanthin + 2 reduced [2Fe-2S]-[ferredoxin] + O2 + 2 H(+) = 2-hydroxyspirilloxanthin + 2 oxidized [2Fe-2S]-[ferredoxin] + H2O. The enzyme catalyses 2-hydroxyspirilloxanthin + 2 reduced [2Fe-2S]-[ferredoxin] + O2 + 2 H(+) = 2,2-dihydroxyspirilloxanthin + 2 oxidized [2Fe-2S]-[ferredoxin] + H2O. It carries out the reaction 2,2-dihydroxyspirilloxanthin = 2-oxospirilloxanthin + H2O. The catalysed reaction is 2-oxospirilloxanthin + 2 reduced [2Fe-2S]-[ferredoxin] + O2 + 2 H(+) = 2'-hydroxy-2-oxospirilloxanthin + 2 oxidized [2Fe-2S]-[ferredoxin] + H2O. It catalyses the reaction 2'-hydroxy-2-oxospirilloxanthin + 2 reduced [2Fe-2S]-[ferredoxin] + O2 + 2 H(+) = 2',2'-dihydroxy-2-oxospirilloxanthin + 2 oxidized [2Fe-2S]-[ferredoxin] + H2O. The enzyme catalyses 2',2'-dihydroxy-2-oxospirilloxanthin = 2,2'-dioxospirilloxanthin + H2O. Its pathway is carotenoid biosynthesis; spheroidene biosynthesis. It functions in the pathway carotenoid biosynthesis; spirilloxanthin biosynthesis. In terms of biological role, involved in the biosynthesis of the carotenoids spheroidene and spirilloxanthin. Catalyzes the introduction of one keto group at the C-2 position of spheroidene and two keto groups at the C-2 and C-2' positions of spirilloxanthin. The sequence is that of Spheroidene monooxygenase from Rubrivivax gelatinosus (Rhodocyclus gelatinosus).